Here is a 332-residue protein sequence, read N- to C-terminus: CMRF35-like molecule 1 (332 aa).

An N-terminal signal peptide occupies residues 1–18 (MHLSLLALFLFWISGCFT). The Extracellular portion of the chain corresponds to 19–181 (AQDPVTGPEE…GDGNGFLDLS (163 aa)). The region spanning 22-125 (PVTGPEEVSG…YDHMFKVHVS (104 aa)) is the Ig-like V-type domain. Intrachain disulfides connect C41–C109 and C55–C63. Residue N89 is glycosylated (N-linked (GlcNAc...) asparagine). Residues 182 to 202 (VLLPVISAALLLLLLVVSLIA) traverse the membrane as a helical segment. The Cytoplasmic portion of the chain corresponds to 203 to 332 (WRMVRRQKKA…EYSSIRRPMP (130 aa)). Disordered regions lie at residues 251 to 270 (PRTS…KDHQ) and 313 to 332 (PRTN…RPMP).

The protein belongs to the CD300 family. In terms of assembly, interacts with PTPN6/SHP-1 in a tyrosine phosphorylation dependent manner. Interacts with IL4R. Post-translationally, phosphorylated on tyrosine.

Its subcellular location is the cell membrane. Its function is as follows. Acts as an inhibitory receptor for myeloid cells and mast cells. Positively regulates the phagocytosis of apoptotic cells (efferocytosis) via phosphatidylserine (PS) recognition; recognizes and binds PS as a ligand which is expressed on the surface of apoptotic cells. Plays an important role in the maintenance of immune homeostasis, by promoting macrophage-mediated efferocytosis and by inhibiting dendritic cell-mediated efferocytosis. Negatively regulates Fc epsilon receptor-dependent mast cell activation and allergic responses via binding to ceramide and sphingomyelin which act as ligands. May act as a coreceptor for interleukin 4 (IL-4). Associates with and regulates IL-4 receptor alpha-mediated responses by augmenting IL-4- and IL-13-induced signaling. Negatively regulates the Toll-like receptor (TLR) signaling mediated by MYD88 and TRIF through activation of PTPN6/SHP-1 and PTPN11/SHP-2. Inhibits osteoclast formation. Induces macrophage cell death upon engagement. This Rattus norvegicus (Rat) protein is CMRF35-like molecule 1 (Cd300lf).